The sequence spans 155 residues: Microsomal glutathione S-transferase 1 (155 aa).

At 3–9 the chain is on the lumenal side; sequence DLKQLMD. A helical membrane pass occupies residues 10-33; that stretch reads NEVLMAFTSYATIILAKMMFLSSA. Over 34–62 the chain is Cytoplasmic; sequence TAFQRLTNKVFANPEDCAGFGKGENAKKF. R38 lines the glutathione pocket. N6-acetyllysine is present on residues K42, K55, and K60. A helical transmembrane segment spans residues 63 to 96; that stretch reads LRTDEKVERVRRAHLNDLENIVPFLGIGLLYSLS. Glutathione contacts are provided by R73, R74, H76, and E81. 3'-nitrotyrosine; in vitro is present on Y93. The Lumenal portion of the chain corresponds to 97 to 99; it reads GPD. Residues 100–123 form a helical membrane-spanning segment; sequence LSTALIHFRIFVGARIYHTIAYLT. Y121 provides a ligand contact to glutathione. Over 124–128 the chain is Cytoplasmic; it reads PLPQP. A helical membrane pass occupies residues 129–148; the sequence is NRGLAFFVGYGVTLSMAYRL. Residues 149 to 155 lie on the Lumenal side of the membrane; it reads LRSRLYL.

The protein belongs to the MAPEG family. In terms of assembly, homotrimer; The trimer binds only one molecule of glutathione. Post-translationally, in vitro, peroxynitrite induces nitration at Tyr-93 which activates the enzyme. As to expression, highest in the liver, followed by kidney and testis and much lower in seminal vesicles, spleen, lung and brain.

The protein resides in the endoplasmic reticulum membrane. The protein localises to the mitochondrion outer membrane. It carries out the reaction RX + glutathione = an S-substituted glutathione + a halide anion + H(+). With respect to regulation, in vitro, can be activated by reagents that attack Cys-50 sulfhydryl, such as N-ethylmaleimide and via nitration of Tyr-93 by peroxynitrite. Conjugation of reduced glutathione to a wide number of exogenous and endogenous hydrophobic electrophiles. In Rattus norvegicus (Rat), this protein is Microsomal glutathione S-transferase 1 (Mgst1).